Reading from the N-terminus, the 369-residue chain is Ubiquinone biosynthesis protein COQ4, mitochondrial (369 aa).

A mitochondrion-targeting transit peptide spans 1–28 (MTSILGSARPLIQVGPKSRNASTSMSRL). The interval 1-70 (MTSILGSARP…NPTNASRHPR (70 aa)) is disordered. Polar residues-rich tracts occupy residues 19-33 (RNASTSMSRLPSFPT) and 47-66 (YATISPTAPRSSQRNPTNAS). Zn(2+) is bound by residues H198, D199, H202, and E214. A disordered region spans residues 330–369 (FSGRAKKGGKRRGWPSKILEHQKAQHQQQQQQQKVDESRN). Residues 332 to 343 (GRAKKGGKRRGW) are compositionally biased toward basic residues.

This sequence belongs to the COQ4 family. Component of a multi-subunit COQ enzyme complex, composed of at least COQ3, COQ4, COQ5, COQ6, COQ7 and COQ9. Zn(2+) serves as cofactor.

It localises to the mitochondrion inner membrane. It carries out the reaction a 4-hydroxy-3-methoxy-5-(all-trans-polyprenyl)benzoate + H(+) = a 2-methoxy-6-(all-trans-polyprenyl)phenol + CO2. It participates in cofactor biosynthesis; ubiquinone biosynthesis. In terms of biological role, lyase that catalyzes the C1-decarboxylation of 4-hydroxy-3-methoxy-5-(all-trans-polyprenyl)benzoic acid into 2-methoxy-6-(all-trans-polyprenyl)phenol during ubiquinone biosynthesis. The polypeptide is Ubiquinone biosynthesis protein COQ4, mitochondrial (Mycosarcoma maydis (Corn smut fungus)).